Reading from the N-terminus, the 491-residue chain is Sterol 14-alpha demethylase (491 aa).

Residues 20-40 (LWMLSTVALLSILVVSVVINV) form a helical membrane-spanning segment. Heme is bound at residue Cys-430.

The protein belongs to the cytochrome P450 family. Heme serves as cofactor.

The protein localises to the endoplasmic reticulum membrane. The enzyme catalyses a 14alpha-methyl steroid + 3 reduced [NADPH--hemoprotein reductase] + 3 O2 = a Delta(14) steroid + formate + 3 oxidized [NADPH--hemoprotein reductase] + 4 H2O + 4 H(+). The catalysed reaction is a 14alpha-methyl steroid + reduced [NADPH--hemoprotein reductase] + O2 = a 14alpha-hydroxymethyl steroid + oxidized [NADPH--hemoprotein reductase] + H2O + H(+). It catalyses the reaction a 14alpha-hydroxymethyl steroid + reduced [NADPH--hemoprotein reductase] + O2 = a 14alpha-formyl steroid + oxidized [NADPH--hemoprotein reductase] + 2 H2O + H(+). It carries out the reaction a 14alpha-formyl steroid + reduced [NADPH--hemoprotein reductase] + O2 = a Delta(14) steroid + formate + oxidized [NADPH--hemoprotein reductase] + H2O + 2 H(+). The enzyme catalyses lanosterol + 3 reduced [NADPH--hemoprotein reductase] + 3 O2 = 4,4-dimethyl-5alpha-cholesta-8,14,24-trien-3beta-ol + formate + 3 oxidized [NADPH--hemoprotein reductase] + 4 H2O + 4 H(+). The catalysed reaction is lanosterol + reduced [NADPH--hemoprotein reductase] + O2 = 32-hydroxylanosterol + oxidized [NADPH--hemoprotein reductase] + H2O + H(+). It catalyses the reaction 32-hydroxylanosterol + reduced [NADPH--hemoprotein reductase] + O2 = 32-oxolanosterol + oxidized [NADPH--hemoprotein reductase] + 2 H2O + H(+). It carries out the reaction 32-oxolanosterol + reduced [NADPH--hemoprotein reductase] + O2 = 4,4-dimethyl-5alpha-cholesta-8,14,24-trien-3beta-ol + formate + oxidized [NADPH--hemoprotein reductase] + H2O + 2 H(+). The enzyme catalyses eburicol + 3 reduced [NADPH--hemoprotein reductase] + 3 O2 = 14-demethyleburicol + formate + 3 oxidized [NADPH--hemoprotein reductase] + 4 H2O + 4 H(+). The catalysed reaction is eburicol + reduced [NADPH--hemoprotein reductase] + O2 = 32-hydroxyeburicol + oxidized [NADPH--hemoprotein reductase] + H2O + H(+). It catalyses the reaction 32-hydroxyeburicol + reduced [NADPH--hemoprotein reductase] + O2 = 32-oxoeburicol + oxidized [NADPH--hemoprotein reductase] + 2 H2O + H(+). It carries out the reaction 32-oxoeburicol + reduced [NADPH--hemoprotein reductase] + O2 = 14-demethyleburicol + formate + oxidized [NADPH--hemoprotein reductase] + H2O + 2 H(+). It functions in the pathway steroid biosynthesis; sterol biosynthesis. In terms of biological role, sterol 14alpha-demethylase, encoded by cyp51A, cyp51B and cyp51C, that plays a critical role in the third module of ergosterol biosynthesis pathway, being ergosterol the major sterol component in fungal membranes that participates in a variety of functions. The third module or late pathway involves the ergosterol synthesis itself through consecutive reactions that mainly occur in the endoplasmic reticulum (ER) membrane. In filamentous fungi, during the initial step of this module, lanosterol (lanosta-8,24-dien-3beta-ol) can be metabolized to eburicol. Sterol 14alpha-demethylase catalyzes the three-step oxidative removal of the 14alpha-methyl group (C-32) of both these sterols in the form of formate, and converts eburicol and lanosterol to 14-demethyleburicol (4,4,24-trimethylergosta-8,14,24(28)-trienol) and 4,4-dimethyl-5alpha-cholesta-8,14,24-trien-3beta-ol, respectively, which are further metabolized by other enzymes in the pathway to ergosterol. Can also use substrates not intrinsic to fungi, such as 24,25-dihydrolanosterol (DHL), producing 4,4'-dimethyl-8,14-cholestadien-3-beta-ol, but at lower rates than the endogenous substrates. Functionally, as a target of azole drugs, plays a crucial role in azole susceptibility. This Aspergillus flavus (strain ATCC 200026 / FGSC A1120 / IAM 13836 / NRRL 3357 / JCM 12722 / SRRC 167) protein is Sterol 14-alpha demethylase.